The sequence spans 205 residues: Protein N-terminal glutamine amidohydrolase (205 aa).

Active-site residues include C20, H74, and D90.

Belongs to the NTAQ1 family. In terms of assembly, monomer.

The catalysed reaction is N-terminal L-glutaminyl-[protein] + H2O = N-terminal L-glutamyl-[protein] + NH4(+). Functionally, mediates the side-chain deamidation of N-terminal glutamine residues to glutamate, an important step in N-end rule pathway of protein degradation. Conversion of the resulting N-terminal glutamine to glutamate renders the protein susceptible to arginylation, polyubiquitination and degradation as specified by the N-end rule. Does not act on substrates with internal or C-terminal glutamine and does not act on non-glutamine residues in any position. This chain is Protein N-terminal glutamine amidohydrolase (tun), found in Drosophila virilis (Fruit fly).